Reading from the N-terminus, the 828-residue chain is Periplasmic nitrate reductase (828 aa).

A signal peptide (tat-type signal) is located at residues 1–31 (MKLSRRSFMKANAVAAAAAAAGLSVPGVARA). The 4Fe-4S Mo/W bis-MGD-type domain maps to 39–95 (IKWDKAPCRFCGTGCGVLVGTQQGRVVACQGDPDAPVNRGLNCIKGYFLPKIMYGKD). The [4Fe-4S] cluster site is built by Cys46, Cys49, Cys53, and Cys81. Mo-bis(molybdopterin guanine dinucleotide) is bound by residues Lys83, Gln150, Asn175, Cys179, 212–219 (WGSNMAEM), 243–247 (STFQH), 262–264 (QSD), Met372, Gln376, Asn482, 508–509 (SD), Lys531, Asp558, and 718–727 (TGRVLEHWHT). Residue Phe794 coordinates substrate. Residues Asn802 and Lys819 each contribute to the Mo-bis(molybdopterin guanine dinucleotide) site.

This sequence belongs to the prokaryotic molybdopterin-containing oxidoreductase family. NasA/NapA/NarB subfamily. Component of the periplasmic nitrate reductase NapAB complex composed of NapA and NapB. The cofactor is [4Fe-4S] cluster. Requires Mo-bis(molybdopterin guanine dinucleotide) as cofactor. Post-translationally, predicted to be exported by the Tat system. The position of the signal peptide cleavage has not been experimentally proven.

The protein resides in the periplasm. It carries out the reaction 2 Fe(II)-[cytochrome] + nitrate + 2 H(+) = 2 Fe(III)-[cytochrome] + nitrite + H2O. Its function is as follows. Catalytic subunit of the periplasmic nitrate reductase complex NapAB. Receives electrons from NapB and catalyzes the reduction of nitrate to nitrite. This Salmonella agona (strain SL483) protein is Periplasmic nitrate reductase.